The sequence spans 324 residues: Zinc finger C2HC domain-containing protein 1A (324 aa).

The C2HC/C3H-type 1 zinc-finger motif lies at 15–44; the sequence is DLLPCKICGRTFFPLALKKHGPICQKTATK. The Zn(2+) site is built by Cys-19, Cys-22, His-34, and Cys-38. Residues 43–83 form a disordered region; sequence TKKRKTFDSSRQRAEGTDIPTVKPLKPRPEPPKKPSNWRRK. Basic and acidic residues predominate over residues 48-58; sequence TFDSSRQRAEG. Residues 118-147 form a C2HC/C3H-type 2 zinc finger; sequence DYIQCPYCQRRFNENAADRHINFCKEQAAR. Positions 122, 125, 137, and 141 each coordinate Zn(2+). Positions 149-225 are disordered; the sequence is SNKGKFSTDS…NKPQTLSPSH (77 aa). Over residues 176 to 187 the composition is skewed to low complexity; sequence SNPPGIPSSGSS. Polar residues-rich tracts occupy residues 188–198 and 206–223; these read RLPQPSTTSKT and KASS…TLSP. Ser-222 carries the phosphoserine modification. At Thr-243 the chain carries Phosphothreonine. At Ser-291 the chain carries Phosphoserine.

The protein belongs to the ZC2HC1 family. Requires Zn(2+) as cofactor.

This is Zinc finger C2HC domain-containing protein 1A (Zc2hc1a) from Mus musculus (Mouse).